A 129-amino-acid chain; its full sequence is Protein SirB2 (129 aa).

The Periplasmic portion of the chain corresponds to 1 to 2 (MT). The chain crosses the membrane as a helical span at residues 3 to 23 (IAMLLTLHLICVALSVSLFVA). Residues 24–41 (RYWWRYCGHALAAARWTR) lie on the Cytoplasmic side of the membrane. Residues 42–62 (IVPPVIDTLLLLSGIGLIVKT) form a helical membrane-spanning segment. At 63–71 (HILPFTESG) the chain is on the periplasmic side. Residues 72–92 (SWLTEKLFGVIIYIVLGFIAL) form a helical membrane-spanning segment. The Cytoplasmic portion of the chain corresponds to 93–104 (DYRQARSQQARF). The chain crosses the membrane as a helical span at residues 105–125 (IAFPLALVVLYIIIKLATTKI). Residues 126–129 (PLLG) lie on the Periplasmic side of the membrane.

It belongs to the SirB2 family.

It is found in the cell inner membrane. Required for maximal expression of sirC, not required to invade host cells. The protein is Protein SirB2 (sirB2) of Salmonella typhi.